The primary structure comprises 473 residues: Photosystem II CP43 reaction center protein (473 aa).

A propeptide spanning residues 1-14 is cleaved from the precursor; it reads MKTLYSLRRYYPVE. Thr15 is subject to N-acetylthreonine. Position 15 is a phosphothreonine (Thr15). 5 consecutive transmembrane segments (helical) span residues 69–93, 134–155, 178–200, 255–275, and 291–312; these read LFEV…PHLA, LIGP…KDKN, KASF…REIT, KPFA…LSYS, and WFNN…ASQA. Glu367 is a binding site for [CaMn4O5] cluster. Residues 447–471 form a helical membrane-spanning segment; sequence RARAAAAGFEKGIDRDSEPVLSMTP.

Belongs to the PsbB/PsbC family. PsbC subfamily. In terms of assembly, PSII is composed of 1 copy each of membrane proteins PsbA, PsbB, PsbC, PsbD, PsbE, PsbF, PsbH, PsbI, PsbJ, PsbK, PsbL, PsbM, PsbT, PsbX, PsbY, PsbZ, Psb30/Ycf12, at least 3 peripheral proteins of the oxygen-evolving complex and a large number of cofactors. It forms dimeric complexes. Requires Binds multiple chlorophylls and provides some of the ligands for the Ca-4Mn-5O cluster of the oxygen-evolving complex. It may also provide a ligand for a Cl- that is required for oxygen evolution. PSII binds additional chlorophylls, carotenoids and specific lipids. as cofactor.

It is found in the plastid. The protein resides in the chloroplast thylakoid membrane. Its function is as follows. One of the components of the core complex of photosystem II (PSII). It binds chlorophyll and helps catalyze the primary light-induced photochemical processes of PSII. PSII is a light-driven water:plastoquinone oxidoreductase, using light energy to abstract electrons from H(2)O, generating O(2) and a proton gradient subsequently used for ATP formation. The protein is Photosystem II CP43 reaction center protein of Anthoceros angustus (Hornwort).